We begin with the raw amino-acid sequence, 264 residues long: MDSRPIGVFDSGVGGLTVLKRLVEVLPGEDYIYFGDTKRVPYGDRSEEEIKKFAKQILNFMREQKVKAVVIACNTTCAVINKSEYDVVLFDVLKAGAESAALYTINKKIGVIATTRTVESKSYEKNIKIIDKNIEVYQKACPEFVPLIEKGLYNSPIAYETASKCLKELKEKDIDTLVLGCTHYPLMASVIEEIMGENVKIVDPAIKLAYDVKDYLLKKDLLNPQIRGKAEFFVSGDKDNFIKTAEMLLGEKIENVLHVDIEKY.

Residues 10–11 and 42–43 each bind substrate; these read DS and YG. The active-site Proton donor/acceptor is the Cys73. A substrate-binding site is contributed by 74–75; it reads NT. The active-site Proton donor/acceptor is Cys181. 182-183 lines the substrate pocket; that stretch reads TH.

This sequence belongs to the aspartate/glutamate racemases family.

It carries out the reaction L-glutamate = D-glutamate. It functions in the pathway cell wall biogenesis; peptidoglycan biosynthesis. Its function is as follows. Provides the (R)-glutamate required for cell wall biosynthesis. The protein is Glutamate racemase of Thermoanaerobacter pseudethanolicus (strain ATCC 33223 / 39E) (Clostridium thermohydrosulfuricum).